We begin with the raw amino-acid sequence, 248 residues long: MKFTLTGSGRMGQQVADVINRSGIHEIASILDDRSVVTAESFLGSDAIIDFTVRDAFLQNLPAMLQSGVPVVVGTTGWDDQIESVKRRVIESGSSLLYSANFSLGVNIFLRTVREAARLIAPFDQFDIAFTEHHHTGKADFPSGTALRAAEMILSVNPRKRTIVRELFDDRKITADELQVGALRLGSVFGKHTAYIDSEMDEIVISHNAKNREGFASGAVQTAKWLAARHTASPGFYTMDDFLNEMLA.

NAD(+) is bound by residues aspartate 32, 74 to 76 (GTT), and 99 to 102 (SANF). The active-site Proton donor/acceptor is histidine 134. Histidine 135 is a (S)-2,3,4,5-tetrahydrodipicolinate binding site. Lysine 138 functions as the Proton donor in the catalytic mechanism. (S)-2,3,4,5-tetrahydrodipicolinate is bound at residue 144 to 145 (GT).

It belongs to the DapB family.

The protein resides in the cytoplasm. It carries out the reaction (S)-2,3,4,5-tetrahydrodipicolinate + NAD(+) + H2O = (2S,4S)-4-hydroxy-2,3,4,5-tetrahydrodipicolinate + NADH + H(+). The catalysed reaction is (S)-2,3,4,5-tetrahydrodipicolinate + NADP(+) + H2O = (2S,4S)-4-hydroxy-2,3,4,5-tetrahydrodipicolinate + NADPH + H(+). It participates in amino-acid biosynthesis; L-lysine biosynthesis via DAP pathway; (S)-tetrahydrodipicolinate from L-aspartate: step 4/4. Catalyzes the conversion of 4-hydroxy-tetrahydrodipicolinate (HTPA) to tetrahydrodipicolinate. The sequence is that of 4-hydroxy-tetrahydrodipicolinate reductase from Chlorobium limicola (strain DSM 245 / NBRC 103803 / 6330).